A 287-amino-acid polypeptide reads, in one-letter code: Coatomer subunit epsilon-1 (287 aa).

Belongs to the COPE family. In terms of assembly, oligomeric complex that consists of at least the alpha, beta, beta', gamma, delta, epsilon and zeta subunits.

Its subcellular location is the cytoplasm. It is found in the golgi apparatus membrane. It localises to the cytoplasmic vesicle. The protein localises to the COPI-coated vesicle membrane. The coatomer is a cytosolic protein complex that binds to dilysine motifs and reversibly associates with Golgi non-clathrin-coated vesicles, which further mediate biosynthetic protein transport from the ER, via the Golgi up to the trans Golgi network. The coatomer complex is required for budding from Golgi membranes, and is essential for the retrograde Golgi-to-ER transport of dilysine-tagged proteins. The polypeptide is Coatomer subunit epsilon-1 (COPE1) (Oryza sativa subsp. japonica (Rice)).